We begin with the raw amino-acid sequence, 318 residues long: Methionyl-tRNA formyltransferase (318 aa).

(6S)-5,6,7,8-tetrahydrofolate is bound at residue 120–123; sequence SLLP.

The protein belongs to the Fmt family.

It carries out the reaction L-methionyl-tRNA(fMet) + (6R)-10-formyltetrahydrofolate = N-formyl-L-methionyl-tRNA(fMet) + (6S)-5,6,7,8-tetrahydrofolate + H(+). Functionally, attaches a formyl group to the free amino group of methionyl-tRNA(fMet). The formyl group appears to play a dual role in the initiator identity of N-formylmethionyl-tRNA by promoting its recognition by IF2 and preventing the misappropriation of this tRNA by the elongation apparatus. In Variovorax paradoxus (strain S110), this protein is Methionyl-tRNA formyltransferase.